The sequence spans 171 residues: Crossover junction endodeoxyribonuclease RuvC (171 aa).

Catalysis depends on residues D7, E66, and D138. Mg(2+)-binding residues include D7, E66, and D138.

It belongs to the RuvC family. Homodimer which binds Holliday junction (HJ) DNA. The HJ becomes 2-fold symmetrical on binding to RuvC with unstacked arms; it has a different conformation from HJ DNA in complex with RuvA. In the full resolvosome a probable DNA-RuvA(4)-RuvB(12)-RuvC(2) complex forms which resolves the HJ. Mg(2+) serves as cofactor.

The protein localises to the cytoplasm. The enzyme catalyses Endonucleolytic cleavage at a junction such as a reciprocal single-stranded crossover between two homologous DNA duplexes (Holliday junction).. Functionally, the RuvA-RuvB-RuvC complex processes Holliday junction (HJ) DNA during genetic recombination and DNA repair. Endonuclease that resolves HJ intermediates. Cleaves cruciform DNA by making single-stranded nicks across the HJ at symmetrical positions within the homologous arms, yielding a 5'-phosphate and a 3'-hydroxyl group; requires a central core of homology in the junction. The consensus cleavage sequence is 5'-(A/T)TT(C/G)-3'. Cleavage occurs on the 3'-side of the TT dinucleotide at the point of strand exchange. HJ branch migration catalyzed by RuvA-RuvB allows RuvC to scan DNA until it finds its consensus sequence, where it cleaves and resolves the cruciform DNA. The chain is Crossover junction endodeoxyribonuclease RuvC from Francisella tularensis subsp. holarctica (strain FTNF002-00 / FTA).